A 301-amino-acid chain; its full sequence is 4-hydroxy-tetrahydrodipicolinate synthase (301 aa).

T57 is a pyruvate binding site. Catalysis depends on Y143, which acts as the Proton donor/acceptor. The active-site Schiff-base intermediate with substrate is the K171. Pyruvate is bound at residue I211.

Belongs to the DapA family. Homotetramer; dimer of dimers.

Its subcellular location is the cytoplasm. The enzyme catalyses L-aspartate 4-semialdehyde + pyruvate = (2S,4S)-4-hydroxy-2,3,4,5-tetrahydrodipicolinate + H2O + H(+). It functions in the pathway amino-acid biosynthesis; L-lysine biosynthesis via DAP pathway; (S)-tetrahydrodipicolinate from L-aspartate: step 3/4. Catalyzes the condensation of (S)-aspartate-beta-semialdehyde [(S)-ASA] and pyruvate to 4-hydroxy-tetrahydrodipicolinate (HTPA). The polypeptide is 4-hydroxy-tetrahydrodipicolinate synthase (Bifidobacterium longum (strain DJO10A)).